Reading from the N-terminus, the 518-residue chain is OTU domain-containing protein 5 (518 aa).

Disordered stretches follow at residues 1–79 (MTIL…SGGA) and 105–144 (PGHSKRRRQGVSAGPGAPGSSPDREDGAGNNSEDEYETAA). Positions 39-53 (SSPPPRWAYPGNPAP) are enriched in pro residues. A compositionally biased stretch (low complexity) spans 116 to 125 (SAGPGAPGSS). Residues 171-294 (FIIKQMKEDG…NIHYNSVVNP (124 aa)) form the OTU domain. The cys-loop stretch occupies residues 176–182 (MKEDGAC). Asp179 is a catalytic residue. The Nucleophile role is filled by Cys182. The interval 231–241 (KRKNNCHGNHI) is variable-loop. Residues 282-287 (YHRNIH) are his-loop. His287 is a catalytic residue. The segment at 371-450 (ARQPRKASAT…GPSNQTCAGA (80 aa)) is disordered. The segment covering 377-390 (ASATCSSATAAASS) has biased composition (low complexity).

It belongs to the peptidase C85 family.

It carries out the reaction Thiol-dependent hydrolysis of ester, thioester, amide, peptide and isopeptide bonds formed by the C-terminal Gly of ubiquitin (a 76-residue protein attached to proteins as an intracellular targeting signal).. Its function is as follows. Deubiquitinating enzyme that may function as negative regulator of the innate immune system. Has peptidase activity towards 'Lys-48'- and 'Lys-63'-linked polyubiquitin chains. Can also cleave 'Lys-11'-linked ubiquitin chains (in vitro). This Xenopus tropicalis (Western clawed frog) protein is OTU domain-containing protein 5 (otud5).